A 415-amino-acid polypeptide reads, in one-letter code: Serine/threonine transporter SstT (415 aa).

8 helical membrane-spanning segments follow: residues 23 to 43 (ILIG…AAIA), 47 to 67 (LGTL…LMLV), 85 to 105 (ILFL…LFSF), 144 to 164 (ALLN…GFAL), 181 to 201 (AVTF…FGLV), 220 to 240 (LLVL…LLVF), 293 to 313 (IPLG…VLTL), and 333 to 353 (VVAS…LLLI).

This sequence belongs to the dicarboxylate/amino acid:cation symporter (DAACS) (TC 2.A.23) family.

Its subcellular location is the cell inner membrane. The enzyme catalyses L-serine(in) + Na(+)(in) = L-serine(out) + Na(+)(out). It catalyses the reaction L-threonine(in) + Na(+)(in) = L-threonine(out) + Na(+)(out). Involved in the import of serine and threonine into the cell, with the concomitant import of sodium (symport system). The sequence is that of Serine/threonine transporter SstT from Klebsiella pneumoniae subsp. pneumoniae (strain ATCC 700721 / MGH 78578).